A 329-amino-acid polypeptide reads, in one-letter code: NAD(+) hydrolase TcpA (329 aa).

In terms of domain architecture, MPN spans 5–134 (VSISYLALEQ…ADCVRFYTVR (130 aa)). The 133-residue stretch at 192–324 (FEYDVFICHA…YVVNEILRVL (133 aa)) folds into the TIR domain. NAD(+) is bound by residues 201-202 (AH) and S231. E267 is a catalytic residue.

The enzyme catalyses NAD(+) + H2O = ADP-D-ribose + nicotinamide + H(+). Its function is as follows. NAD(+) hydrolase (NADase) that catalyzes cleavage of NAD(+) into ADP-D-ribose (ADPR) and nicotinamide. The protein is NAD(+) hydrolase TcpA of Theionarchaea archaeon (strain DG-70-1).